We begin with the raw amino-acid sequence, 397 residues long: Tryptophan synthase beta chain (397 aa).

Residue K86 is modified to N6-(pyridoxal phosphate)lysine.

The protein belongs to the TrpB family. Tetramer of two alpha and two beta chains. Requires pyridoxal 5'-phosphate as cofactor.

The enzyme catalyses (1S,2R)-1-C-(indol-3-yl)glycerol 3-phosphate + L-serine = D-glyceraldehyde 3-phosphate + L-tryptophan + H2O. Its pathway is amino-acid biosynthesis; L-tryptophan biosynthesis; L-tryptophan from chorismate: step 5/5. The beta subunit is responsible for the synthesis of L-tryptophan from indole and L-serine. The polypeptide is Tryptophan synthase beta chain (Aeromonas salmonicida (strain A449)).